A 127-amino-acid polypeptide reads, in one-letter code: Large ribosomal subunit protein bL20 (127 aa).

The protein belongs to the bacterial ribosomal protein bL20 family.

Functionally, binds directly to 23S ribosomal RNA and is necessary for the in vitro assembly process of the 50S ribosomal subunit. It is not involved in the protein synthesizing functions of that subunit. This chain is Large ribosomal subunit protein bL20, found in Corynebacterium urealyticum (strain ATCC 43042 / DSM 7109).